Reading from the N-terminus, the 444-residue chain is Crh-like protein 3 (444 aa).

The signal sequence occupies residues 1–19 (MVGKSTLLSVLASASVAFA). Cys-27 and Cys-34 are oxidised to a cystine. A GH16 domain is found at 57–271 (SLESCVPEPV…WAGGEIDWNS (215 aa)). Residue Glu-157 is the Nucleophile of the active site. Catalysis depends on Glu-161, which acts as the Proton donor. Residue Glu-161 coordinates chitin. Residues Asn-187 and Asn-228 are each glycosylated (N-linked (GlcNAc...) asparagine). Residues Trp-248 and Thr-259 each coordinate chitin. Asn-315, Asn-323, Asn-336, and Asn-371 each carry an N-linked (GlcNAc...) asparagine glycan. Residue Ser-415 is the site of GPI-anchor amidated serine attachment. Positions 416 to 444 (ADSLVANQERVLKGSLFAGIVAVVAMMAL) are cleaved as a propeptide — removed in mature form.

This sequence belongs to the glycosyl hydrolase 16 family. CRH1 subfamily. Forms homodimers as well as heterodimers with other crh protein members crh1 and crh2. Dimerization may be necessary for the transglycosylation activity.

It localises to the cell membrane. The catalysed reaction is Random endo-hydrolysis of N-acetyl-beta-D-glucosaminide (1-&gt;4)-beta-linkages in chitin and chitodextrins.. In terms of biological role, dual chitinase/transglycosylase that plays a role in cell wall architecture. Chitinase and transglycosylase activities are coupled. Required for the polysaccharide cross-linking at the septa and the cell wall. More specifically, transfers chitin to 1,6-beta-glucan in the cell wall. The protein is Crh-like protein 3 of Botryotinia fuckeliana (strain B05.10) (Noble rot fungus).